A 494-amino-acid polypeptide reads, in one-letter code: UPF0371 protein SPG_0310 (494 aa).

It belongs to the UPF0371 family.

The chain is UPF0371 protein SPG_0310 from Streptococcus pneumoniae serotype 19F (strain G54).